Consider the following 29-residue polypeptide: Small toxic protein ZorP (29 aa).

A helical membrane pass occupies residues 10–27; the sequence is VLIAVLELLVALLRLIDL.

Its subcellular location is the membrane. Toxic component of a type I toxin-antitoxin (TA) system. Overexpression leads to cell stasis and a decrease in colony-forming units. Probably repressed by cognate small RNA orzP. Base pairing occurs between 18 bases in the 5' UTR of zorP mRNA and the 5' end of OrzP sRNA. The chain is Small toxic protein ZorP from Escherichia coli O157:H7.